We begin with the raw amino-acid sequence, 298 residues long: 4-diphosphocytidyl-2-C-methyl-D-erythritol kinase (298 aa).

The active site involves Lys-25. 109–119 contributes to the ATP binding site; it reads PVGGGFGGGSS. Residue Asp-151 is part of the active site.

This sequence belongs to the GHMP kinase family. IspE subfamily.

It catalyses the reaction 4-CDP-2-C-methyl-D-erythritol + ATP = 4-CDP-2-C-methyl-D-erythritol 2-phosphate + ADP + H(+). It functions in the pathway isoprenoid biosynthesis; isopentenyl diphosphate biosynthesis via DXP pathway; isopentenyl diphosphate from 1-deoxy-D-xylulose 5-phosphate: step 3/6. In terms of biological role, catalyzes the phosphorylation of the position 2 hydroxy group of 4-diphosphocytidyl-2C-methyl-D-erythritol. In Xylella fastidiosa (strain 9a5c), this protein is 4-diphosphocytidyl-2-C-methyl-D-erythritol kinase.